A 296-amino-acid chain; its full sequence is MPELPEVEVVRRGLEKWVVGASFGEVEVLHPRAVRRHAPGAADFAARVSGCGVTEARRRGKYLWLTLDSGEALLAHLGMSGQLLVQPRHAAAERHLRVRLPLTARQGHDPEAPQELRFVDQRTFGHLLVDRLVDDGTGTGLPSVISHIARDPLDPAFDEDAFAAALCRKRTELKRALLDQSLISGIGNIYADEALWMSQLHWATPTEALSRSQVATLLAAVREVMVAALAQGGTSFDSLYVNVNGESGYFARSLNAYGRNDQPCARCGTPIQRETFMNRSSYSCPRCQPRPRHARA.

The Schiff-base intermediate with DNA role is filled by proline 2. Catalysis depends on glutamate 3, which acts as the Proton donor. The active-site Proton donor; for beta-elimination activity is lysine 61. Residues histidine 95, arginine 122, and lysine 169 each coordinate DNA. The FPG-type zinc-finger motif lies at 255 to 289; sequence NAYGRNDQPCARCGTPIQRETFMNRSSYSCPRCQP. The active-site Proton donor; for delta-elimination activity is arginine 279.

It belongs to the FPG family. As to quaternary structure, monomer. Zn(2+) serves as cofactor.

The catalysed reaction is Hydrolysis of DNA containing ring-opened 7-methylguanine residues, releasing 2,6-diamino-4-hydroxy-5-(N-methyl)formamidopyrimidine.. The enzyme catalyses 2'-deoxyribonucleotide-(2'-deoxyribose 5'-phosphate)-2'-deoxyribonucleotide-DNA = a 3'-end 2'-deoxyribonucleotide-(2,3-dehydro-2,3-deoxyribose 5'-phosphate)-DNA + a 5'-end 5'-phospho-2'-deoxyribonucleoside-DNA + H(+). Its function is as follows. Involved in base excision repair of DNA damaged by oxidation or by mutagenic agents. Acts as a DNA glycosylase that recognizes and removes damaged bases. Has a preference for oxidized purines, such as 7,8-dihydro-8-oxoguanine (8-oxoG). Has AP (apurinic/apyrimidinic) lyase activity and introduces nicks in the DNA strand. Cleaves the DNA backbone by beta-delta elimination to generate a single-strand break at the site of the removed base with both 3'- and 5'-phosphates. The chain is Formamidopyrimidine-DNA glycosylase from Thermobifida fusca (strain YX).